Reading from the N-terminus, the 105-residue chain is U2-lycotoxin-Ls1c (105 aa).

An N-terminal signal peptide occupies residues 1–17; it reads MIKYVLISALLVVAVYS. The propeptide occupies 18–41; the sequence is FTIEDSEDALLEEAEDELDTEEER. 4 cysteine pairs are disulfide-bonded: C51-C67, C58-C97, C60-C83, and C69-C81.

This sequence belongs to the neurotoxin 04 (omega-agtx) family. 01 (type I omega-agtx) subfamily. Expressed by the venom gland.

The protein resides in the secreted. In terms of biological role, insecticidal to house crickets. It induces an excitatory slow-onset impact that leads to irreversible spastic paralysis. It also modifies human voltage-gated potassium channel Kv1.5/KCNA5. Most likely, it binds to the voltage-sensing domain of the channel, suggesting it does not block the pore but prevents its opening at physiological membrane potentials. The recombinant peptide binds to the channel in an irreversible manner and slows down the hKv1.5 current activation kinetics. It is not toxic to mice, when intracranially injected (at 0.5 ug/g mouse). The protein is U2-lycotoxin-Ls1c of Lycosa singoriensis (Wolf spider).